The sequence spans 308 residues: uncharacterized protein (308 aa).

An ABC transporter domain is found at 6–234; sequence LHIEGLDKKI…TEKAIIEVQP (229 aa). 38-45 provides a ligand contact to ATP; sequence GPNGSGKT.

Belongs to the ABC transporter superfamily.

This is an uncharacterized protein from Bacillus subtilis (strain 168).